Consider the following 271-residue polypeptide: Secretagogin (271 aa).

6 consecutive EF-hand domains span residues Leu-8–Lys-43, Lys-53–Asn-88, Asp-100–Gln-135, Lys-144–Phe-179, Glu-192–Leu-227, and Val-235–Pro-271. Ca(2+) contacts are provided by Asp-21, Asp-23, Asn-25, Tyr-27, and Glu-32. Residues Asp-113, Asp-115, Ser-117, Glu-124, Asn-159, Asp-161, Arg-163, Asp-168, Asp-205, Ser-207, Thr-209, Glu-216, Asp-249, Asn-251, Asp-253, Lys-255, and Glu-260 each contribute to the Ca(2+) site.

It is found in the cytoplasm. The polypeptide is Secretagogin (scgn) (Xenopus laevis (African clawed frog)).